The following is a 542-amino-acid chain: Cytochrome P450 monooxygenase sdnH (542 aa).

Residues Leu25–Tyr45 traverse the membrane as a helical segment. Positions Ile141–Asp160 are disordered. The helical transmembrane segment at Phe340 to Leu360 threads the bilayer. Residue Cys483 participates in heme binding. Asn506 carries N-linked (GlcNAc...) asparagine glycosylation.

It belongs to the cytochrome P450 family. The cofactor is heme.

The protein localises to the membrane. It participates in antibiotic biosynthesis. Its function is as follows. Cytochrome P450 monooxygenase; part of the gene cluster that mediates the biosynthesis of sordarin and hypoxysordarin, glycoside antibiotics with a unique tetracyclic diterpene aglycone structure. First, the geranylgeranyl diphosphate synthase sdnC constructs GGDP from farnesyl diphosphate and isopentenyl diphosphate. The diterpene cyclase sdnA then catalyzes the cyclization of GGDP to afford cycloaraneosene. Cycloaraneosene is then hydroxylated four times by the putative cytochrome P450 monooxygenases sdnB, sdnE, sdnF and sdnH to give a hydroxylated cycloaraneosene derivative such as cycloaraneosene-8,9,13,19-tetraol. Although the order of the hydroxylations is unclear, at least C8, C9 and C13 of the cycloaraneosene skeleton are hydroxylated before the sordaricin formation. Dehydration of the 13-hydroxy group of the hydroxylated cycloaraneosene derivative might be catalyzed by an unassigned hypothetical protein such as sdnG and sdnP to construct the cyclopentadiene moiety. The FAD-dependent oxidoreductase sdnN is proposed to catalyze the oxidation at C9 of the hydroxylated cycloaraneosene derivative and also catalyze the Baeyer-Villiger oxidation to give the lactone intermediate. The presumed lactone intermediate would be hydrolyzed to give an acrolein moiety and a carboxylate moiety. Then, [4+2]cycloaddition would occur between the acrolein moiety and the cyclopentadiene moiety to give sordaricin. SdnN might also be involved in the [4+2]cycloaddition after the hypothesized oxidation to accommodate the oxidized product and prompt the [4+2]cycloaddition. GDP-6-deoxy-D-altrose may be biosynthesized from GDP-D-mannose by the putative GDP-mannose-4,6-dehydratase sdnI and the short-chain dehydrogenase sdnK. The glycosyltransferase sdnJ catalyzes the attachment of 6-deoxy-D-altrose onto the 19-hydroxy group of sordaricin to give 4'-O-demethylsordarin. The methyltransferase sdnD would complete the biosynthesis of sordarin. Sordarin can be further modified into hypoxysordarin. The unique acyl chain at the 3'-hydroxy group of hypoxysordarin would be constructed by an iterative type I PKS sdnO and the trans-acting polyketide methyltransferase sdnL. SdnL would be responsible for the introduction of an alpha-methyl group of the polyketide chain. Alternatively, the beta-lactamase-like protein sdnR might be responsible for the cleavage and transfer of the polyketide chain from the PKS sdnO to sordarin. Two putative cytochrome P450 monooxygenases, sdnQ and sdnT, might catalyze the epoxidations of the polyketide chain to complete the biosynthesis of hypoxysordarin. Transcriptional regulators sdnM and sdnS are presumably encoded for the transcriptional regulation of the expression of the sdn gene cluster. This is Cytochrome P450 monooxygenase sdnH from Sordaria araneosa (Pleurage araneosa).